The chain runs to 366 residues: Holliday junction branch migration complex subunit RuvB (366 aa).

The interval 1–50 (MAIISSKKQPPEPNGEPKQRRESAKAPSTENILKPEAAIDEQEQQEEGIR) is disordered. The segment at 13-210 (PNGEPKQRRE…FGLIQKLRFY (198 aa)) is large ATPase domain (RuvB-L). Basic and acidic residues predominate over residues 15–24 (GEPKQRRESA). ATP is bound by residues Ile49, Arg50, Gly91, Lys94, Thr95, Thr96, 157–159 (EDY), Arg200, Tyr210, and Arg247. Thr95 contacts Mg(2+). The small ATPAse domain (RuvB-S) stretch occupies residues 211 to 281 (EVDELTQIVL…IASEALQLFQ (71 aa)). Residues 284–366 (PCGLDWTDRQ…TPPNEQLSLL (83 aa)) are head domain (RuvB-H). Residues Arg339 and Arg344 each coordinate DNA.

The protein belongs to the RuvB family. As to quaternary structure, homohexamer. Forms an RuvA(8)-RuvB(12)-Holliday junction (HJ) complex. HJ DNA is sandwiched between 2 RuvA tetramers; dsDNA enters through RuvA and exits via RuvB. An RuvB hexamer assembles on each DNA strand where it exits the tetramer. Each RuvB hexamer is contacted by two RuvA subunits (via domain III) on 2 adjacent RuvB subunits; this complex drives branch migration. In the full resolvosome a probable DNA-RuvA(4)-RuvB(12)-RuvC(2) complex forms which resolves the HJ.

The protein resides in the cytoplasm. It catalyses the reaction ATP + H2O = ADP + phosphate + H(+). Its function is as follows. The RuvA-RuvB-RuvC complex processes Holliday junction (HJ) DNA during genetic recombination and DNA repair, while the RuvA-RuvB complex plays an important role in the rescue of blocked DNA replication forks via replication fork reversal (RFR). RuvA specifically binds to HJ cruciform DNA, conferring on it an open structure. The RuvB hexamer acts as an ATP-dependent pump, pulling dsDNA into and through the RuvAB complex. RuvB forms 2 homohexamers on either side of HJ DNA bound by 1 or 2 RuvA tetramers; 4 subunits per hexamer contact DNA at a time. Coordinated motions by a converter formed by DNA-disengaged RuvB subunits stimulates ATP hydrolysis and nucleotide exchange. Immobilization of the converter enables RuvB to convert the ATP-contained energy into a lever motion, pulling 2 nucleotides of DNA out of the RuvA tetramer per ATP hydrolyzed, thus driving DNA branch migration. The RuvB motors rotate together with the DNA substrate, which together with the progressing nucleotide cycle form the mechanistic basis for DNA recombination by continuous HJ branch migration. Branch migration allows RuvC to scan DNA until it finds its consensus sequence, where it cleaves and resolves cruciform DNA. This chain is Holliday junction branch migration complex subunit RuvB, found in Nostoc punctiforme (strain ATCC 29133 / PCC 73102).